We begin with the raw amino-acid sequence, 345 residues long: NADPH dehydrogenase (345 aa).

23-26 provides a ligand contact to FMN; it reads SPMC. Residue Tyr28 coordinates substrate. The FMN site is built by Ala60 and Gln102. 164-167 provides a ligand contact to substrate; sequence HGAH. FMN is bound by residues Arg215 and 307-308; that span reads GR.

Belongs to the NADH:flavin oxidoreductase/NADH oxidase family. NamA subfamily. Homotetramer. Requires FMN as cofactor.

It carries out the reaction A + NADPH + H(+) = AH2 + NADP(+). Its function is as follows. Catalyzes the reduction of the double bond of an array of alpha,beta-unsaturated aldehydes and ketones. It also reduces the nitro group of nitroester and nitroaromatic compounds. It could have a role in detoxification processes. The chain is NADPH dehydrogenase from Bacillus cereus (strain ATCC 10987 / NRS 248).